Reading from the N-terminus, the 31-residue chain is Cytochrome b6-f complex subunit 6 (31 aa).

The helical transmembrane segment at 7 to 25 (YSGFLLAAPIPASAPFTGL) threads the bilayer.

Belongs to the PetL family. As to quaternary structure, the 4 large subunits of the cytochrome b6-f complex are cytochrome b6, subunit IV (17 kDa polypeptide, PetD), cytochrome f and the Rieske protein, while the 4 small subunits are PetG, PetL, PetM and PetN. The complex functions as a dimer.

It is found in the plastid. It localises to the chloroplast thylakoid membrane. Component of the cytochrome b6-f complex, which mediates electron transfer between photosystem II (PSII) and photosystem I (PSI), cyclic electron flow around PSI, and state transitions. PetL is important for photoautotrophic growth as well as for electron transfer efficiency and stability of the cytochrome b6-f complex. This is Cytochrome b6-f complex subunit 6 from Huperzia lucidula (Shining clubmoss).